We begin with the raw amino-acid sequence, 213 residues long: Thiamine-phosphate synthase (213 aa).

Residues 39 to 43 (QYRDK) and D71 each bind 4-amino-2-methyl-5-(diphosphooxymethyl)pyrimidine. Mg(2+)-binding residues include D72 and D91. Residue S108 coordinates 4-amino-2-methyl-5-(diphosphooxymethyl)pyrimidine. 135–137 (TDT) is a 2-[(2R,5Z)-2-carboxy-4-methylthiazol-5(2H)-ylidene]ethyl phosphate binding site. 4-amino-2-methyl-5-(diphosphooxymethyl)pyrimidine is bound at residue K138. 2-[(2R,5Z)-2-carboxy-4-methylthiazol-5(2H)-ylidene]ethyl phosphate is bound by residues G165 and 185–186 (VS).

It belongs to the thiamine-phosphate synthase family. Requires Mg(2+) as cofactor.

It catalyses the reaction 2-[(2R,5Z)-2-carboxy-4-methylthiazol-5(2H)-ylidene]ethyl phosphate + 4-amino-2-methyl-5-(diphosphooxymethyl)pyrimidine + 2 H(+) = thiamine phosphate + CO2 + diphosphate. The catalysed reaction is 2-(2-carboxy-4-methylthiazol-5-yl)ethyl phosphate + 4-amino-2-methyl-5-(diphosphooxymethyl)pyrimidine + 2 H(+) = thiamine phosphate + CO2 + diphosphate. The enzyme catalyses 4-methyl-5-(2-phosphooxyethyl)-thiazole + 4-amino-2-methyl-5-(diphosphooxymethyl)pyrimidine + H(+) = thiamine phosphate + diphosphate. The protein operates within cofactor biosynthesis; thiamine diphosphate biosynthesis; thiamine phosphate from 4-amino-2-methyl-5-diphosphomethylpyrimidine and 4-methyl-5-(2-phosphoethyl)-thiazole: step 1/1. In terms of biological role, condenses 4-methyl-5-(beta-hydroxyethyl)thiazole monophosphate (THZ-P) and 2-methyl-4-amino-5-hydroxymethyl pyrimidine pyrophosphate (HMP-PP) to form thiamine monophosphate (TMP). The polypeptide is Thiamine-phosphate synthase (Thermoplasma acidophilum (strain ATCC 25905 / DSM 1728 / JCM 9062 / NBRC 15155 / AMRC-C165)).